A 741-amino-acid chain; its full sequence is Linoleate 9S-lipoxygenase (741 aa).

The region spanning 1 to 53 (IPGAFYIKNFMQVEFYLKSLTLEDIPNHGTIHFICNSWIYNSKVYKSDRIFFA) is the PLAT domain. The 686-residue stretch at 56–741 (TYLPSETPAP…SEEGLTFRGI (686 aa)) folds into the Lipoxygenase domain. The disordered stretch occupies residues 108–144 (ALARPVLGGSTLPYPRRGRTGRPKTKKDPNSEKPSDF). The span at 123 to 132 (RRGRTGRPKT) shows a compositional bias: basic residues. Residues 133 to 144 (KKDPNSEKPSDF) are compositionally biased toward basic and acidic residues. Fe cation is bound by residues His-407, His-412, His-598, and Asn-602.

Belongs to the lipoxygenase family. As to quaternary structure, monomer. Requires Fe cation as cofactor.

The protein resides in the cytoplasm. It catalyses the reaction (9Z,12Z)-octadecadienoate + O2 = (9S)-hydroperoxy-(10E,12Z)-octadecadienoate. The enzyme catalyses (9Z,12Z)-octadecadienoate + O2 = (13S)-hydroperoxy-(9Z,11E)-octadecadienoate. The catalysed reaction is (9Z,12Z,15Z)-octadecatrienoate + O2 = (13S)-hydroperoxy-(9Z,11E,15Z)-octadecatrienoate. It participates in lipid metabolism; oxylipin biosynthesis. Plant lipoxygenase may be involved in a number of diverse aspects of plant physiology including growth and development, pest resistance, and senescence or responses to wounding. It catalyzes the hydroperoxidation of lipids containing a cis,cis-1,4-pentadiene structure. This is Linoleate 9S-lipoxygenase from Phaseolus vulgaris (Kidney bean).